The sequence spans 572 residues: Bilirubin oxidase (572 aa).

A signal peptide spans 1-19 (MFKHTLGAAALSLLFNSNA). A propeptide spanning residues 20 to 38 (VQASPVPETSPATGHLFKR) is cleaved from the precursor. Plastocyanin-like domains are found at residues 98–194 (VGYD…YMLT) and 404–526 (VAFA…VFVD). Residues His132, His134, His172, His174, His436, His439, His441, His494, Cys495, His496, His500, and Met505 each contribute to the Cu cation site. Residues Asn510 and Asn520 are each glycosylated (N-linked (GlcNAc...) asparagine).

It belongs to the multicopper oxidase family. Cu cation serves as cofactor.

The enzyme catalyses 2 (4Z,15Z)-bilirubin IXalpha + O2 = 2 biliverdin IXalpha + 2 H2O. Functionally, oxidation of bilirubin and other tetrapyrroles. This is Bilirubin oxidase from Albifimbria verrucaria (Myrothecium leaf spot and pod blight fungus).